Reading from the N-terminus, the 530-residue chain is Autoinducer-2 kinase (530 aa).

It belongs to the FGGY kinase family.

The protein resides in the cytoplasm. It carries out the reaction (S)-4,5-dihydroxypentane-2,3-dione + ATP = (2S)-2-hydroxy-3,4-dioxopentyl phosphate + ADP + H(+). Catalyzes the phosphorylation of autoinducer-2 (AI-2) to phospho-AI-2, which subsequently inactivates the transcriptional regulator LsrR and leads to the transcription of the lsr operon. Phosphorylates the ring-open form of (S)-4,5-dihydroxypentane-2,3-dione (DPD), which is the precursor to all AI-2 signaling molecules, at the C5 position. The polypeptide is Autoinducer-2 kinase (Photorhabdus laumondii subsp. laumondii (strain DSM 15139 / CIP 105565 / TT01) (Photorhabdus luminescens subsp. laumondii)).